The primary structure comprises 800 residues: Phenylalanine--tRNA ligase beta subunit (800 aa).

One can recognise a tRNA-binding domain in the interval 39–147; the sequence is FDAIADIVVG…QDSVPGVRLV (109 aa). The B5 domain maps to 401–477; that stretch reads WQAAQLRFRP…RVYGMDNIPP (77 aa). D455, D461, E464, and E465 together coordinate Mg(2+). An FDX-ACB domain is found at 706-800; sequence PVFPPVKRDI…SLTEALGVRI (95 aa).

Belongs to the phenylalanyl-tRNA synthetase beta subunit family. Type 1 subfamily. In terms of assembly, tetramer of two alpha and two beta subunits. Requires Mg(2+) as cofactor.

It localises to the cytoplasm. It catalyses the reaction tRNA(Phe) + L-phenylalanine + ATP = L-phenylalanyl-tRNA(Phe) + AMP + diphosphate + H(+). The protein is Phenylalanine--tRNA ligase beta subunit of Oleidesulfovibrio alaskensis (strain ATCC BAA-1058 / DSM 17464 / G20) (Desulfovibrio alaskensis).